The following is an 80-amino-acid chain: Large ribosomal subunit protein bL28 (80 aa).

The disordered stretch occupies residues M1–S21.

It belongs to the bacterial ribosomal protein bL28 family.

This Azobacteroides pseudotrichonymphae genomovar. CFP2 protein is Large ribosomal subunit protein bL28.